Here is a 474-residue protein sequence, read N- to C-terminus: Eukaryotic translation initiation factor 3 subunit L (474 aa).

In terms of domain architecture, PCI spans 255–449 (DAIRMFSHIL…DLDYALQGDL (195 aa)).

The protein belongs to the eIF-3 subunit L family. As to quaternary structure, component of the eukaryotic translation initiation factor 3 (eIF-3) complex.

It is found in the cytoplasm. Functionally, component of the eukaryotic translation initiation factor 3 (eIF-3) complex, which is involved in protein synthesis of a specialized repertoire of mRNAs and, together with other initiation factors, stimulates binding of mRNA and methionyl-tRNAi to the 40S ribosome. The eIF-3 complex specifically targets and initiates translation of a subset of mRNAs involved in cell proliferation. The sequence is that of Eukaryotic translation initiation factor 3 subunit L from Chaetomium globosum (strain ATCC 6205 / CBS 148.51 / DSM 1962 / NBRC 6347 / NRRL 1970) (Soil fungus).